The following is a 737-amino-acid chain: Lysyl oxidase homolog 2A (737 aa).

The signal sequence occupies residues 1-18; the sequence is MAVSSALCIFSLLVLAQA. 4 consecutive SRCR domains span residues 29-130, 159-270, 294-393, and 403-512; these read LRLA…VICN, IRPI…VSCV, VRLR…VRCN, and IRLS…VSCS. Intrachain disulfides connect Cys55/Cys119, Cys68/Cys129, Cys99/Cys109, Cys188/Cys259, Cys201/Cys269, Cys235/Cys245, Cys319/Cys382, Cys332/Cys392, and Cys363/Cys373. N-linked (GlcNAc...) asparagine glycosylation occurs at Asn256. An N-linked (GlcNAc...) asparagine glycan is attached at Asn423. 3 disulfides stabilise this stretch: Cys432–Cys498, Cys445–Cys511, and Cys479–Cys489. The lysyl-oxidase like stretch occupies residues 516–718; it reads PDLVLNAQLV…WTYSCHIGGS (203 aa). Asp517 and Leu518 together coordinate Ca(2+). 4 cysteine pairs are disulfide-bonded: Cys541-Cys592, Cys547-Cys662, Cys624-Cys640, and Cys630-Cys652. Cu cation-binding residues include His593, His595, and His597. Asn611 is a glycosylation site (N-linked (GlcNAc...) asparagine). Residues 620–656 constitute a cross-link (lysine tyrosylquinone (Lys-Tyr)); that stretch reads KASFCLEDTHCDEGISKRYHCANFGEQGITVGCWDTY. Tyr656 bears the 2',4',5'-topaquinone mark. Positions 689, 691, 694, and 695 each coordinate Ca(2+). The cysteines at positions 699 and 713 are disulfide-linked.

Belongs to the lysyl oxidase family. It depends on Cu cation as a cofactor. Lysine tyrosylquinone residue is required as a cofactor. In terms of processing, the lysine tyrosylquinone cross-link (LTQ) is generated by condensation of the epsilon-amino group of a lysine with a topaquinone produced by oxidation of tyrosine.

The protein resides in the secreted. The protein localises to the extracellular space. It localises to the extracellular matrix. Its subcellular location is the basement membrane. It is found in the nucleus. The protein resides in the chromosome. The protein localises to the endoplasmic reticulum. It catalyses the reaction L-lysyl-[protein] + O2 + H2O = (S)-2-amino-6-oxohexanoyl-[protein] + H2O2 + NH4(+). Mediates the post-translational oxidative deamination of lysine residues on target proteins leading to the formation of deaminated lysine (allysine). Acts as a transcription corepressor and specifically mediates deamination of trimethylated 'Lys-4' of histone H3 (H3K4me3), a specific tag for epigenetic transcriptional activation. Shows no activity against histone H3 when it is trimethylated on 'Lys-9' (H3K9me3) or 'Lys-27' (H3K27me3) or when 'Lys-4' is monomethylated (H3K4me1) or dimethylated (H3K4me2). Also mediates deamination of methylated TAF10, a member of the transcription factor IID (TFIID) complex, which induces release of TAF10 from promoters, leading to inhibition of TFIID-dependent transcription. LOXL2-mediated deamination of TAF10 results in transcriptional repression of genes required for embryonic stem cell pluripotency. Involved in epithelial to mesenchymal transition (EMT) and participates in repression of E-cadherin, probably by mediating deamination of histone H3. When secreted into the extracellular matrix, promotes cross-linking of extracellular matrix proteins by mediating oxidative deamination of peptidyl lysine residues in precursors to fibrous collagen and elastin. Acts as a regulator of sprouting angiogenesis, probably via collagen IV scaffolding. Acts as a regulator of chondrocyte differentiation, probably by regulating expression of factors that control chondrocyte differentiation. Required with loxl2b for correct expression of Sox2 and for neural differentiation. The protein is Lysyl oxidase homolog 2A (loxl2a) of Danio rerio (Zebrafish).